Reading from the N-terminus, the 2912-residue chain is Fibrillin-2 (2912 aa).

Residues 1–28 (MGRRRRLCLQLYFLWLGCVVLWAQGTAG) form the signal peptide. The disordered stretch occupies residues 27–52 (AGQPQPPPPKPPRPQPPPQQVRSATA). Residues 29–77 (QPQPPPPKPPRPQPPPQQVRSATAGSEGGFLAPEYREEGAAVASRVRRR) constitute a propeptide that is removed on maturation. The segment covering 30-45 (PQPPPPKPPRPQPPPQ) has biased composition (pro residues). EGF-like domains follow at residues 111–142 (IVPICRNSCGDGFCSRPNMCTCSSGQISSTCG), 145–176 (SIQQCSVRCMNGGTCADDHCQCQKGYIGTYCG), and 176–208 (GQPVCENGCQNGGRCIGPNRCACVYGFTGPQCE). Intrachain disulfides connect Cys115–Cys124, Cys119–Cys130, Cys132–Cys141, Cys149–Cys159, Cys153–Cys164, Cys166–Cys175, Cys180–Cys190, Cys184–Cys196, and Cys198–Cys207. Residues 149–359 (CSVRCMNGGT…VTSTDGSRCI (211 aa)) form an interaction with MFAP4 region. Residues 214–266 (GPCFTQVNNQMCQGQLTGIVCTKTLCCATIGRAWGHPCEMCPAQPQPCRRGFI) enclose the TB 1 domain. The region spanning 276–317 (DVDECQAIPGICQGGNCINTVGSFECRCPAGHKQSETTQKCE) is the EGF-like 4; calcium-binding domain. Intrachain disulfides connect Cys280-Cys292, Cys287-Cys301, Cys303-Cys316, Cys322-Cys334, Cys329-Cys343, and Cys345-Cys358. An O-linked (Glc) serine glycan is attached at Ser298. Positions 318-359 (DIDECSIIPGICETGECSNTVGSYFCVCPRGYVTSTDGSRCI) constitute an EGF-like 5; calcium-binding domain. A glycan (O-linked (Glc) serine) is linked at Ser340. A TB 2 domain is found at 364 to 417 (GMCFSGLVNGRCAQELPGRMTKMQCCCEPGRCWGIGTIPEACPVRGSEEYRRLC). A glycan (N-linked (GlcNAc...) asparagine) is linked at Asn492. The region spanning 494 to 534 (TIDICKHHANLCLNGRCIPTVSSYRCECNMGYKQDANGDCI) is the EGF-like 6 domain. 15 disulfides stabilise this stretch: Cys498–Cys510, Cys505–Cys519, Cys521–Cys533, Cys539–Cys549, Cys544–Cys558, Cys560–Cys573, Cys579–Cys591, Cys586–Cys600, Cys602–Cys615, Cys621–Cys632, Cys627–Cys641, Cys643–Cys656, Cys662–Cys673, Cys668–Cys682, and Cys684–Cys697. The O-linked (Glc) serine glycan is linked to Ser516. The EGF-like 7; calcium-binding domain occupies 535–574 (DVDECTSNPCTNGDCVNTPGSYYCKCHAGFQRTPTKQACI). The O-linked (Glc) serine glycan is linked to Ser555. In terms of domain architecture, EGF-like 8; calcium-binding spans 575-616 (DIDECIQNGVLCKNGRCVNTDGSFQCICNAGFELTTDGKNCV). Ser597 carries O-linked (Glc) serine glycosylation. An EGF-like 9; calcium-binding domain is found at 617–657 (DHDECTTTNMCLNGMCINEDGSFKCICKPGFVLAPNGRYCT). Residue Ser638 is glycosylated (O-linked (Glc) serine). The EGF-like 10; calcium-binding domain occupies 658–698 (DVDECQTPGICMNGHCINSEGSFRCDCPPGLAVGMDGRVCV). Ser679 carries an O-linked (Glc) serine glycan. One can recognise a TB 3 domain in the interval 704–756 (STCYGGIKKGVCVRPFPGAVTKSECCCANPDYGFGEPCQPCPAKNSAEFHGLC). The EGF-like 11; calcium-binding domain occupies 768–809 (DINECALDPDICANGICENLRGSYRCNCNSGYEPDASGRNCI). Disulfide bonds link Cys772-Cys784, Cys779-Cys793, Cys795-Cys808, Cys814-Cys826, Cys821-Cys835, Cys837-Cys850, Cys856-Cys866, Cys861-Cys875, and Cys877-Cys890. The EGF-like 12; calcium-binding domain maps to 810-851 (DIDECLVNRLLCDNGLCRNTPGSYSCTCPPGYVFRTETETCE). O-linked (Glc) serine glycosylation occurs at Ser832. The region spanning 852-891 (DINECESNPCVNGACRNNLGSFNCECSPGSKLSSTGLICI) is the EGF-like 13; calcium-binding domain. Residue Ser872 is glycosylated (O-linked (Glc) serine). The region spanning 896-947 (GTCWLNIQDSRCEVNINGATLKSECCATLGAAWGSPCERCELDTACPRGLAR) is the TB 4 domain. An EGF-like 14; calcium-binding domain is found at 955–996 (DVNECEVFPGVCPNGRCVNSKGSFHCECPEGLTLDGTGRVCL). 3 disulfides stabilise this stretch: Cys959-Cys971, Cys966-Cys980, and Cys982-Cys995. An O-linked (Glc) serine glycan is attached at Ser977. The TB 5 domain maps to 1001 to 1052 (EQCYLKWDEDECIHPVPGKFRMDACCCAVGAAWGTECEECPKPGTKEYETLC). Positions 1073 to 1114 (DINECKAFPGMCTYGKCRNTIGSFKCRCNSGFALDMEERNCT) constitute an EGF-like 15; calcium-binding domain. 36 disulfides stabilise this stretch: Cys1077–Cys1089, Cys1084–Cys1098, Cys1100–Cys1113, Cys1119–Cys1131, Cys1126–Cys1140, Cys1142–Cys1156, Cys1162–Cys1174, Cys1169–Cys1183, Cys1185–Cys1198, Cys1204–Cys1216, Cys1211–Cys1225, Cys1227–Cys1240, Cys1246–Cys1257, Cys1253–Cys1266, Cys1268–Cys1281, Cys1287–Cys1299, Cys1294–Cys1308, Cys1310–Cys1323, Cys1329–Cys1341, Cys1336–Cys1350, Cys1352–Cys1365, Cys1371–Cys1384, Cys1378–Cys1393, Cys1395–Cys1406, Cys1412–Cys1425, Cys1419–Cys1434, Cys1436–Cys1447, Cys1453–Cys1465, Cys1460–Cys1474, Cys1476–Cys1489, Cys1495–Cys1506, Cys1501–Cys1515, Cys1517–Cys1530, Cys1536–Cys1547, Cys1542–Cys1556, and Cys1558–Cys1571. Ser1095 carries O-linked (Glc) serine glycosylation. Residue Asn1112 is glycosylated (N-linked (GlcNAc...) asparagine). The EGF-like 16; calcium-binding domain maps to 1115–1157 (DIDECRISPDLCGSGICVNTPGSFECECFEGYESGFMMMKNCM). Residues 1158-1199 (DIDECERNPLLCRGGTCVNTEGSFQCDCPLGHELSPSREDCV) enclose the EGF-like 17; calcium-binding domain. The O-linked (Glc) serine glycan is linked to Ser1180. An EGF-like 18; calcium-binding domain is found at 1200–1241 (DINECSLSDNLCRNGKCVNMIGTYQCSCNPGYQATPDRQGCT). An O-linked (Glc) threonine glycan is attached at Thr1222. Positions 1242 to 1282 (DIDECMIMNGGCDTQCTNSEGSYECSCSEGYALMPDGRSCA) constitute an EGF-like 19; calcium-binding domain. The O-linked (Glc) serine glycan is linked to Ser1263. The region spanning 1283–1324 (DIDECENNPDICDGGQCTNIPGEYRCLCYDGFMASMDMKTCI) is the EGF-like 20; calcium-binding domain. The EGF-like 21; calcium-binding domain occupies 1325–1366 (DVNECDLNSNICMFGECENTKGSFICHCQLGYSVKKGTTGCT). An O-linked (Glc) serine glycan is attached at Ser1347. The region spanning 1367–1407 (DVDECEIGAHNCDMHASCLNIPGSFKCSCREGWIGNGIKCI) is the EGF-like 22; calcium-binding domain. Ser1390 carries an O-linked (Glc) serine glycan. Residues 1408 to 1448 (DLDECSNGTHQCSINAQCVNTPGSYRCACSEGFTGDGFTCS) enclose the EGF-like 23; calcium-binding domain. N-linked (GlcNAc...) asparagine glycosylation is present at Asn1414. Positions 1449–1490 (DVDECAENINLCENGQCLNVPGAYRCECEMGFTPASDSRSCQ) constitute an EGF-like 24; calcium-binding domain. Residues 1491-1531 (DIDECSFQNICVFGTCNNLPGMFHCICDDGYELDRTGGNCT) form the EGF-like 25; calcium-binding domain. N-linked (GlcNAc...) asparagine glycosylation occurs at Asn1529. An EGF-like 26; calcium-binding domain is found at 1532 to 1572 (DIDECADPINCVNGLCVNTPGRYECNCPPDFQLNPTGVGCV). The TB 6 domain occupies 1577-1633 (GNCYLKFGPRGDGSLSCNTEIGVGVSRSSCCCSLGKAWGNPCETCPPVNSTEYYTLC). N-linked (GlcNAc...) asparagine glycosylation occurs at Asn1625. The region spanning 1650 to 1691 (DIDECQELPGLCQGGNCINTFGSFQCECPQGYYLSEDTRICE) is the EGF-like 27; calcium-binding domain. Disulfide bonds link Cys1654/Cys1666, Cys1661/Cys1675, Cys1677/Cys1690, Cys1696/Cys1708, Cys1703/Cys1717, and Cys1719/Cys1732. A glycan (O-linked (Glc) serine) is linked at Ser1672. The region spanning 1692 to 1733 (DIDECFAHPGVCGPGTCYNTLGNYTCICPPEYMQVNGGHNCM) is the EGF-like 28; calcium-binding domain. N-linked (GlcNAc...) asparagine glycosylation is present at Asn1714. The interval 1735–2171 (MRKSFCYRSY…VPSLHDTRED (437 aa)) is interaction with MFAP4. The region spanning 1738–1791 (SFCYRSYNGTTCENELPFNVTKRMCCCTYNVGKAWNKPCEPCPTPGTADFKTIC) is the TB 7 domain. Asn1745 and Asn1756 each carry an N-linked (GlcNAc...) asparagine glycan. The region spanning 1808-1849 (DIDECKEIPGICANGVCINQIGSFRCECPTGFSYNDLLLVCE) is the EGF-like 29; calcium-binding domain. Intrachain disulfides connect Cys1812/Cys1824, Cys1819/Cys1833, Cys1835/Cys1848, Cys1854/Cys1867, Cys1861/Cys1876, Cys1878/Cys1890, Cys1896/Cys1908, Cys1903/Cys1917, Cys1919/Cys1932, Cys1938/Cys1948, Cys1943/Cys1957, Cys1959/Cys1971, Cys1977/Cys1990, Cys1985/Cys1999, Cys2001/Cys2014, Cys2020/Cys2032, Cys2027/Cys2041, Cys2043/Cys2054, Cys2060/Cys2072, Cys2067/Cys2081, and Cys2083/Cys2096. In terms of domain architecture, EGF-like 30; calcium-binding spans 1850–1891 (DIDECSNGDNLCQRNADCINSPGSYRCECAAGFKLSPNGACV). O-linked (Glc) serine glycosylation occurs at Ser1873. The 42-residue stretch at 1892 to 1933 (DRNECLEIPNVCSHGLCVDLQGSYQCICHNGFKASQDQTMCM) folds into the EGF-like 31; calcium-binding domain. Positions 1934 to 1972 (DVDECERHPCGNGTCKNTVGSYNCLCYPGFELTHNNDCL) constitute an EGF-like 32; calcium-binding domain. An N-linked (GlcNAc...) asparagine glycan is attached at Asn1945. The O-linked (Glc) serine glycan is linked to Ser1954. In terms of domain architecture, EGF-like 33; calcium-binding spans 1973-2015 (DIDECSSFFGQVCRNGRCFNEIGSFKCLCNEGYELTPDGKNCI). Ser1996 carries an O-linked (Glc) serine glycan. The EGF-like 34; calcium-binding domain occupies 2016 to 2055 (DTNECVALPGSCSPGTCQNLEGSFRCICPPGYEVKSENCI). The region spanning 2056–2097 (DINECDEDPNICLFGSCTNTPGGFQCLCPPGFVLSDNGRRCF) is the EGF-like 35; calcium-binding domain. Positions 2102 to 2155 (SFCFTNFENGKCSVPKAFNTTKAKCCCSKMPGEGWGDPCELCPKDDEVAFQDLC) constitute a TB 8 domain. Asn2120 carries an N-linked (GlcNAc...) asparagine glycan. The EGF-like 36; calcium-binding domain maps to 2171–2212 (DVNECLESPGICSNGQCINTDGSFRCECPMGYNLDYTGVRCV). Cystine bridges form between Cys2175-Cys2187, Cys2182-Cys2196, Cys2198-Cys2211, Cys2217-Cys2228, Cys2223-Cys2237, Cys2239-Cys2251, Cys2257-Cys2268, Cys2264-Cys2277, Cys2279-Cys2292, Cys2298-Cys2312, Cys2305-Cys2321, Cys2323-Cys2336, Cys2342-Cys2354, Cys2349-Cys2363, and Cys2365-Cys2378. O-linked (Glc) serine glycosylation occurs at Ser2193. The region spanning 2213-2252 (DTDECSIGNPCGNGTCTNVIGSFECNCNEGFEPGPMMNCE) is the EGF-like 37; calcium-binding domain. N-linked (GlcNAc...) asparagine glycosylation is present at Asn2225. The region spanning 2253–2293 (DINECAQNPLLCAFRCMNTFGSYECTCPIGYALREDQKMCK) is the EGF-like 38; calcium-binding domain. Ser2274 carries O-linked (Glc) serine glycosylation. Positions 2294 to 2337 (DLDECAEGLHDCESRGMMCKNLIGTFMCICPPGMARRPDGEGCV) constitute an EGF-like 39; calcium-binding domain. The EGF-like 40; calcium-binding domain occupies 2338-2379 (DENECRTKPGICENGRCVNIIGSYRCECNEGFQSSSSGTECL). O-linked (Glc) serine glycosylation occurs at Ser2360. The TB 9 domain maps to 2384-2437 (GLCFAEVLQTICQMASSSRNLVTKSECCCDGGRGWGHQCELCPLPGTAQYKKIC). Positions 2449–2490 (DIDECKVMPNLCTNGQCINTMGSFRCFCKVGYTTDISGTSCI) constitute an EGF-like 41; calcium-binding domain. 21 disulfides stabilise this stretch: Cys2453-Cys2465, Cys2460-Cys2474, Cys2476-Cys2489, Cys2495-Cys2506, Cys2502-Cys2515, Cys2517-Cys2530, Cys2536-Cys2547, Cys2543-Cys2556, Cys2558-Cys2569, Cys2575-Cys2588, Cys2582-Cys2597, Cys2599-Cys2612, Cys2618-Cys2628, Cys2624-Cys2637, Cys2639-Cys2652, Cys2658-Cys2669, Cys2664-Cys2678, Cys2680-Cys2693, Cys2699-Cys2710, Cys2706-Cys2719, and Cys2721-Cys2733. A glycan (O-linked (Glc) serine) is linked at Ser2471. The region spanning 2491–2531 (DLDECSQSPKPCNYICKNTEGSYQCSCPRGYVLQEDGKTCK) is the EGF-like 42; calcium-binding domain. Ser2512 carries an O-linked (Glc) serine glycan. The region spanning 2532–2570 (DLDECQTKQHNCQFLCVNTLGGFTCKCPPGFTQHHTACI) is the EGF-like 43; calcium-binding domain. The EGF-like 44; calcium-binding domain occupies 2571–2613 (DNNECGSQPSLCGAKGICQNTPGSFSCECQRGFSLDATGLNCE). Ser2594 is a glycosylation site (O-linked (Glc) serine). The 40-residue stretch at 2614–2653 (DVDECDGNHRCQHGCQNILGGYRCGCPQGYIQHYQWNQCV) folds into the EGF-like 45; calcium-binding domain. Residues 2654 to 2694 (DENECSNPNACGSASCYNTLGSYKCACPSGFSFDQFSSACH) form the EGF-like 46; calcium-binding domain. Ser2675 carries an O-linked (Glc) serine glycan. The 40-residue stretch at 2695 to 2734 (DVNECSSSKNPCNYGCSNTEGGYLCGCPPGYYRVGQGHCV) folds into the EGF-like 47; calcium-binding domain. N-linked (GlcNAc...) asparagine glycosylation is present at Asn2808.

It belongs to the fibrillin family. As to quaternary structure, interacts with BMP2, BMP4, BMP7, BMP10 and GDF5. Interacts with MFAP2 and MFAP5. Interacts with ADAMTSL5. Interacts with MFAP4. In terms of processing, N-glycosylated. O-glycosylated on serine residues by POGLUT2 and POGLUT3. In terms of tissue distribution, almost exclusively expressed in placenta. Expressed at much lower level in other tissues. Expressed in fetal eye (18 weeks)in the retinal pigment epithelium (RPE), the choroid, Bruch's membrane and in the sclera. Not expressed in the neural retina. As to expression, present at high level in cytotrophoblasts as compared with syncytiotrophoblasts at 8-9 weeks of pregnancy (at protein level). Levels in the serum increase during pregnancy (at protein level).

It localises to the secreted. It is found in the extracellular space. The protein localises to the extracellular matrix. In terms of biological role, fibrillins are structural components of 10-12 nm extracellular calcium-binding microfibrils, which occur either in association with elastin or in elastin-free bundles. Fibrillin-2-containing microfibrils regulate the early process of elastic fiber assembly. Regulates osteoblast maturation by controlling TGF-beta bioavailability and calibrating TGF-beta and BMP levels, respectively. Hormone secreted by trophoblasts that promotes trophoblast invasiveness. Has glucogenic activity: is able to increase plasma glucose levels. This chain is Fibrillin-2, found in Homo sapiens (Human).